The chain runs to 169 residues: Crossover junction endodeoxyribonuclease RuvC (169 aa).

Catalysis depends on residues aspartate 11, glutamate 71, and aspartate 143. Positions 11, 71, and 143 each coordinate Mg(2+).

The protein belongs to the RuvC family. Homodimer which binds Holliday junction (HJ) DNA. The HJ becomes 2-fold symmetrical on binding to RuvC with unstacked arms; it has a different conformation from HJ DNA in complex with RuvA. In the full resolvosome a probable DNA-RuvA(4)-RuvB(12)-RuvC(2) complex forms which resolves the HJ. Requires Mg(2+) as cofactor.

The protein localises to the cytoplasm. The catalysed reaction is Endonucleolytic cleavage at a junction such as a reciprocal single-stranded crossover between two homologous DNA duplexes (Holliday junction).. In terms of biological role, the RuvA-RuvB-RuvC complex processes Holliday junction (HJ) DNA during genetic recombination and DNA repair. Endonuclease that resolves HJ intermediates. Cleaves cruciform DNA by making single-stranded nicks across the HJ at symmetrical positions within the homologous arms, yielding a 5'-phosphate and a 3'-hydroxyl group; requires a central core of homology in the junction. The consensus cleavage sequence is 5'-(A/T)TT(C/G)-3'. Cleavage occurs on the 3'-side of the TT dinucleotide at the point of strand exchange. HJ branch migration catalyzed by RuvA-RuvB allows RuvC to scan DNA until it finds its consensus sequence, where it cleaves and resolves the cruciform DNA. This Bartonella quintana (strain Toulouse) (Rochalimaea quintana) protein is Crossover junction endodeoxyribonuclease RuvC.